The following is a 140-amino-acid chain: Truncated tyrosine phosphatase D1 (140 aa).

The 140-residue stretch at 1–140 (MRRPNCIAEI…SAQWIQFLKK (140 aa)) folds into the Tyrosine-protein phosphatase domain.

It belongs to the protein-tyrosine phosphatase family.

The protein is Truncated tyrosine phosphatase D1 (D1) of Microplitis demolitor bracovirus (isolate Webb) (MdBV).